Consider the following 77-residue polypeptide: Exodeoxyribonuclease 7 small subunit (77 aa).

This sequence belongs to the XseB family. As to quaternary structure, heterooligomer composed of large and small subunits.

The protein localises to the cytoplasm. The catalysed reaction is Exonucleolytic cleavage in either 5'- to 3'- or 3'- to 5'-direction to yield nucleoside 5'-phosphates.. Its function is as follows. Bidirectionally degrades single-stranded DNA into large acid-insoluble oligonucleotides, which are then degraded further into small acid-soluble oligonucleotides. In Clostridium acetobutylicum (strain ATCC 824 / DSM 792 / JCM 1419 / IAM 19013 / LMG 5710 / NBRC 13948 / NRRL B-527 / VKM B-1787 / 2291 / W), this protein is Exodeoxyribonuclease 7 small subunit.